The sequence spans 256 residues: Thiazole synthase (256 aa).

K95 functions as the Schiff-base intermediate with DXP in the catalytic mechanism. Residues G156, 182–183 (AG), and 204–205 (NT) contribute to the 1-deoxy-D-xylulose 5-phosphate site.

It belongs to the ThiG family. In terms of assembly, homotetramer. Forms heterodimers with either ThiH or ThiS.

It is found in the cytoplasm. It catalyses the reaction [ThiS sulfur-carrier protein]-C-terminal-Gly-aminoethanethioate + 2-iminoacetate + 1-deoxy-D-xylulose 5-phosphate = [ThiS sulfur-carrier protein]-C-terminal Gly-Gly + 2-[(2R,5Z)-2-carboxy-4-methylthiazol-5(2H)-ylidene]ethyl phosphate + 2 H2O + H(+). The protein operates within cofactor biosynthesis; thiamine diphosphate biosynthesis. In terms of biological role, catalyzes the rearrangement of 1-deoxy-D-xylulose 5-phosphate (DXP) to produce the thiazole phosphate moiety of thiamine. Sulfur is provided by the thiocarboxylate moiety of the carrier protein ThiS. In vitro, sulfur can be provided by H(2)S. This Salmonella schwarzengrund (strain CVM19633) protein is Thiazole synthase.